Consider the following 268-residue polypeptide: 5'-nucleotidase SurE (268 aa).

A divalent metal cation-binding residues include D24, D25, S55, and N111.

Belongs to the SurE nucleotidase family. A divalent metal cation is required as a cofactor.

It is found in the cytoplasm. The enzyme catalyses a ribonucleoside 5'-phosphate + H2O = a ribonucleoside + phosphate. Nucleotidase that shows phosphatase activity on nucleoside 5'-monophosphates. The chain is 5'-nucleotidase SurE from Deinococcus radiodurans (strain ATCC 13939 / DSM 20539 / JCM 16871 / CCUG 27074 / LMG 4051 / NBRC 15346 / NCIMB 9279 / VKM B-1422 / R1).